Here is a 430-residue protein sequence, read N- to C-terminus: Ribosomal protein uS12 methylthiotransferase RimO (430 aa).

The region spanning 1 to 116 is the MTTase N-terminal domain; it reads MKIGIKVLGC…IAEAIEKATP (116 aa). [4Fe-4S] cluster is bound by residues Cys-10, Cys-46, Cys-79, Cys-146, Cys-150, and Cys-153. The region spanning 132–362 is the Radical SAM core domain; the sequence is SCNNSFAYVK…LIFQSQIAYE (231 aa). The 66-residue stretch at 365 to 430 folds into the TRAM domain; that stretch reads KRFVGKNLNV…DEYDLKGELI (66 aa).

It belongs to the methylthiotransferase family. RimO subfamily. [4Fe-4S] cluster serves as cofactor.

It is found in the cytoplasm. It catalyses the reaction L-aspartate(89)-[ribosomal protein uS12]-hydrogen + (sulfur carrier)-SH + AH2 + 2 S-adenosyl-L-methionine = 3-methylsulfanyl-L-aspartate(89)-[ribosomal protein uS12]-hydrogen + (sulfur carrier)-H + 5'-deoxyadenosine + L-methionine + A + S-adenosyl-L-homocysteine + 2 H(+). In terms of biological role, catalyzes the methylthiolation of an aspartic acid residue of ribosomal protein uS12. In Pseudothermotoga lettingae (strain ATCC BAA-301 / DSM 14385 / NBRC 107922 / TMO) (Thermotoga lettingae), this protein is Ribosomal protein uS12 methylthiotransferase RimO.